The following is a 751-amino-acid chain: Oxysterol-binding protein-related protein 11 (751 aa).

Residue Met1 is modified to N-acetylmethionine. The disordered stretch occupies residues Met1 to Trp57. Ser15 is subject to Phosphoserine. Thr27 is modified (phosphothreonine). The span at Asn31–Gly52 shows a compositional bias: low complexity. A PH domain is found at Met63 to Gln160. Phosphoserine occurs at positions 177, 179, 182, 186, 189, and 194. Disordered stretches follow at residues Ser475–Pro497 and Glu694–Arg716.

Belongs to the OSBP family. As to quaternary structure, heterodimer with OSBPL9.

The protein resides in the late endosome membrane. It localises to the golgi apparatus. The protein localises to the trans-Golgi network membrane. The catalysed reaction is a 1,2-diacyl-sn-glycero-3-phospho-(1D-myo-inositol 4-phosphate)(out) + a 1,2-diacyl-sn-glycero-3-phospho-L-serine(in) = a 1,2-diacyl-sn-glycero-3-phospho-(1D-myo-inositol 4-phosphate)(in) + a 1,2-diacyl-sn-glycero-3-phospho-L-serine(out). Its function is as follows. Plays a role in regulating ADIPOQ and FABP4 levels in differentiating adipocytes and is also involved in regulation of adipocyte triglyceride storage. Weakly binds 25-hydroxycholesterol. Interacts with OSBPL9 to function as lipid transfer proteins. Together they form a heterodimer that localizes at the ER-trans-Golgi membrane contact sites, and exchanges phosphatidylserine (1,2-diacyl-sn-glycero-3-phospho-L-serine, PS) for phosphatidylinositol-4-phosphate (1,2-diacyl-sn-glycero-3-phospho-(1D-myo-inositol 4-phosphate), PI(4)P) between the two organelles, a step that is critical for sphingomyelin synthesis in the Golgi complex. The protein is Oxysterol-binding protein-related protein 11 (Osbpl11) of Mus musculus (Mouse).